Consider the following 430-residue polypeptide: Serine--tRNA ligase (430 aa).

Polar residues predominate over residues 45-58 (ENLQAERNSRSKSI). Residues 45 to 65 (ENLQAERNSRSKSIGQAKARG) form a disordered region. 237–239 (TSE) contributes to the L-serine binding site. 268–270 (RSE) is an ATP binding site. Residue Glu291 participates in L-serine binding. Residue 355–358 (EISS) coordinates ATP. Residue Ser391 participates in L-serine binding.

This sequence belongs to the class-II aminoacyl-tRNA synthetase family. Type-1 seryl-tRNA synthetase subfamily. Homodimer. The tRNA molecule binds across the dimer.

Its subcellular location is the cytoplasm. It carries out the reaction tRNA(Ser) + L-serine + ATP = L-seryl-tRNA(Ser) + AMP + diphosphate + H(+). It catalyses the reaction tRNA(Sec) + L-serine + ATP = L-seryl-tRNA(Sec) + AMP + diphosphate + H(+). The protein operates within aminoacyl-tRNA biosynthesis; selenocysteinyl-tRNA(Sec) biosynthesis; L-seryl-tRNA(Sec) from L-serine and tRNA(Sec): step 1/1. In terms of biological role, catalyzes the attachment of serine to tRNA(Ser). Is also able to aminoacylate tRNA(Sec) with serine, to form the misacylated tRNA L-seryl-tRNA(Sec), which will be further converted into selenocysteinyl-tRNA(Sec). This is Serine--tRNA ligase from Erwinia tasmaniensis (strain DSM 17950 / CFBP 7177 / CIP 109463 / NCPPB 4357 / Et1/99).